A 271-amino-acid chain; its full sequence is Ribosomal RNA small subunit methyltransferase A (271 aa).

S-adenosyl-L-methionine-binding residues include histidine 11, leucine 13, glycine 38, glutamate 59, aspartate 84, and asparagine 109.

Belongs to the class I-like SAM-binding methyltransferase superfamily. rRNA adenine N(6)-methyltransferase family. RsmA subfamily.

The protein resides in the cytoplasm. It catalyses the reaction adenosine(1518)/adenosine(1519) in 16S rRNA + 4 S-adenosyl-L-methionine = N(6)-dimethyladenosine(1518)/N(6)-dimethyladenosine(1519) in 16S rRNA + 4 S-adenosyl-L-homocysteine + 4 H(+). Its function is as follows. Specifically dimethylates two adjacent adenosines (A1518 and A1519) in the loop of a conserved hairpin near the 3'-end of 16S rRNA in the 30S particle. May play a critical role in biogenesis of 30S subunits. The sequence is that of Ribosomal RNA small subunit methyltransferase A from Trichormus variabilis (strain ATCC 29413 / PCC 7937) (Anabaena variabilis).